Consider the following 543-residue polypeptide: Chaperonin GroEL (543 aa).

ATP is bound by residues 29 to 32 (TLGP), 86 to 90 (DGTTT), Gly-413, 476 to 478 (NAA), and Asp-492.

It belongs to the chaperonin (HSP60) family. Forms a cylinder of 14 subunits composed of two heptameric rings stacked back-to-back. Interacts with the co-chaperonin GroES.

It is found in the cytoplasm. The enzyme catalyses ATP + H2O + a folded polypeptide = ADP + phosphate + an unfolded polypeptide.. Its function is as follows. Together with its co-chaperonin GroES, plays an essential role in assisting protein folding. The GroEL-GroES system forms a nano-cage that allows encapsulation of the non-native substrate proteins and provides a physical environment optimized to promote and accelerate protein folding. In Streptococcus pyogenes serotype M3 (strain SSI-1), this protein is Chaperonin GroEL.